The following is a 78-amino-acid chain: Acyl carrier protein (78 aa).

Residues 2-77 (SDTADRVKKI…DAIKYIDENK (76 aa)) enclose the Carrier domain. Residue Ser-37 is modified to O-(pantetheine 4'-phosphoryl)serine.

This sequence belongs to the acyl carrier protein (ACP) family. 4'-phosphopantetheine is transferred from CoA to a specific serine of apo-ACP by AcpS. This modification is essential for activity because fatty acids are bound in thioester linkage to the sulfhydryl of the prosthetic group.

The protein resides in the cytoplasm. The protein operates within lipid metabolism; fatty acid biosynthesis. In terms of biological role, carrier of the growing fatty acid chain in fatty acid biosynthesis. The chain is Acyl carrier protein from Novosphingobium aromaticivorans (strain ATCC 700278 / DSM 12444 / CCUG 56034 / CIP 105152 / NBRC 16084 / F199).